A 546-amino-acid polypeptide reads, in one-letter code: Crossover junction endonuclease EME1A (546 aa).

Disordered stretches follow at residues 1 to 55 (MSDF…FLDE) and 88 to 232 (VISL…REKQ). The segment covering 28–49 (PTDLNLDTEPSLQKQPPGSAST) has biased composition (polar residues). Composition is skewed to basic and acidic residues over residues 103 to 120 (SSKKYEPVYTDSWKKPCR) and 149 to 167 (DAIEVDSDHEKEDTGVEKM). Polar residues predominate over residues 173-183 (TITSKSTSLSA). Positions 188–245 (KKKMSKDEKTRAAEEKKLQKEQEKLQKAASKAEDAEHKKLEREKQKWAKEKDKALKCI) form a coiled coil. Residues 192-232 (SKDEKTRAAEEKKLQKEQEKLQKAASKAEDAEHKKLEREKQ) are compositionally biased toward basic and acidic residues. An ERCC4 domain is found at 278 to 478 (NPIQRSIVWT…PSLKSLLKVY (201 aa)).

The protein belongs to the EME1/MMS4 family. As to quaternary structure, forms a heterodimer with MUS81. Mg(2+) serves as cofactor. Ca(2+) is required as a cofactor.

It is found in the nucleus. Functionally, interacts with MUS81 to form a DNA structure-specific endonuclease with substrate preference for branched DNA structures with a 5'-end at the branch nick. Typical substrates include 3'-flap structures, D-loops, replication forks, nicked Holliday junctions and also intact Holliday junctions with a reduced efficiency. May be required in mitosis for the processing of stalled or collapsed replication fork intermediates. Plays a role in DNA repair and in genotoxic stress-induced homologous recombination (HR) in somatic cells. Mediates a subset of meiotic recombination events that are insensitive to crossover interference. The protein is Crossover junction endonuclease EME1A (EME1A) of Arabidopsis thaliana (Mouse-ear cress).